Reading from the N-terminus, the 210-residue chain is Orotate phosphoribosyltransferase (210 aa).

Residues Arg-96, Lys-100, His-102, and 122-130 (EDLISTGGS) contribute to the 5-phospho-alpha-D-ribose 1-diphosphate site. Ser-126 provides a ligand contact to orotate.

Belongs to the purine/pyrimidine phosphoribosyltransferase family. PyrE subfamily. As to quaternary structure, homodimer. Mg(2+) serves as cofactor.

The enzyme catalyses orotidine 5'-phosphate + diphosphate = orotate + 5-phospho-alpha-D-ribose 1-diphosphate. Its pathway is pyrimidine metabolism; UMP biosynthesis via de novo pathway; UMP from orotate: step 1/2. Its function is as follows. Catalyzes the transfer of a ribosyl phosphate group from 5-phosphoribose 1-diphosphate to orotate, leading to the formation of orotidine monophosphate (OMP). The protein is Orotate phosphoribosyltransferase of Streptococcus pneumoniae (strain ATCC BAA-255 / R6).